The sequence spans 912 residues: Translation initiation factor IF-2 (912 aa).

Residues 185–204 (NATRPKRKTKEEKQKEREER) form a disordered region. The segment covering 193-204 (TKEEKQKEREER) has biased composition (basic and acidic residues). The region spanning 411–581 (LRPPIVTIMG…LLEAELLDLK (171 aa)) is the tr-type G domain. A G1 region spans residues 420 to 427 (GHVDHGKT). 420-427 (GHVDHGKT) provides a ligand contact to GTP. Residues 445-449 (GITQH) are G2. Residues 467–470 (DTPG) are G3. GTP contacts are provided by residues 467–471 (DTPGH) and 521–524 (NKID). A G4 region spans residues 521-524 (NKID). The segment at 557 to 559 (SAK) is G5.

It belongs to the TRAFAC class translation factor GTPase superfamily. Classic translation factor GTPase family. IF-2 subfamily.

It is found in the cytoplasm. One of the essential components for the initiation of protein synthesis. Protects formylmethionyl-tRNA from spontaneous hydrolysis and promotes its binding to the 30S ribosomal subunits. Also involved in the hydrolysis of GTP during the formation of the 70S ribosomal complex. The sequence is that of Translation initiation factor IF-2 from Azobacteroides pseudotrichonymphae genomovar. CFP2.